Consider the following 518-residue polypeptide: Protein FAM98A (518 aa).

Disordered regions lie at residues 297-415 (VLMG…GHSS) and 434-518 (GSGY…HYTS). A compositionally biased stretch (basic and acidic residues) spans 302-311 (VPDRGGRPNE). 3 stretches are compositionally biased toward gly residues: residues 349 to 364 (GGRG…GGRG), 383 to 396 (WTDG…GYQD), and 405 to 415 (QPGGYHGGHSS). Residues 447 to 459 (RYQDGGHHGDRGG) show a composition bias toward basic and acidic residues. The span at 460-484 (GRGGRGGRGGRGGRAGQGGGWGGRG) shows a compositional bias: gly residues. Residues 488–504 (YHQGGQFEQHFQHGGYQ) are compositionally biased toward low complexity. Positions 505–518 (YNHSGFGQGRHYTS) are enriched in polar residues.

It belongs to the FAM98 family. Interacts (via N- and C-terminus) with DDX1. Interacts (via N- and C-terminus) with C14orf166. Interacts with FAM98B. Interacts with PLEKHM1 (via N- and C-terminus). In terms of tissue distribution, expressed strongly in colorectal cancer cells. Expressed strongly in colorectal cancer tissues compared to wild-type colon samples (at protein level). Expressed strongly in colorectal cancer tissues compared to wild-type colon samples.

In terms of biological role, positively stimulates PRMT1-induced protein arginine methylation. Involved in skeletal homeostasis. Positively regulates lysosome peripheral distribution and ruffled border formation in osteoclasts. The sequence is that of Protein FAM98A from Homo sapiens (Human).